The sequence spans 205 residues: Spermatogenesis-associated protein 24 (205 aa).

Residues 17-166 (LAFDQLRDVI…QQKQIFRNHM (150 aa)) are a coiled coil. The segment at 138 to 185 (EDILNGKENEIKELQQVISQQKQIFRNHMSDFRIQKQQESYMAQVLDQ) is required for interaction with CBX5 and TBPL1. Residues 180–205 (AQVLDQKHKKASGTRQAHSHQHPREK) form a disordered region. Residues 186 to 205 (KHKKASGTRQAHSHQHPREK) show a composition bias toward basic residues.

This sequence belongs to the SPATA24 family. Homodimer. Interacts with CBX3, CBX5, GMNN, GTF2B, TBPL1 and the polycomb proteins PHCF2, RNF2 and SCMH1 but not with CBX1 or PCGF2.

The protein resides in the cytoplasm. It localises to the nucleus. Its subcellular location is the nucleolus. It is found in the nucleoplasm. Functionally, binds DNA with high affinity but does not bind to TATA boxes. Synergises with GMNN and TBP in activation of TATA box-containing promoters and with GMNN and TBPL1 in activation of the NF1 TATA-less promoter. May play a role in cytoplasm movement and removal during spermiogenesis. The protein is Spermatogenesis-associated protein 24 (SPATA24) of Macaca fascicularis (Crab-eating macaque).